Here is a 160-residue protein sequence, read N- to C-terminus: Non-secretory ribonuclease (160 aa).

A signal peptide spans 1 to 27 (MVPKLFTSPICLLLLLGLMGVEGSLHA). The C-linked (Man) tryptophan glycan is linked to W34. The active-site Proton acceptor is the H42. A glycan (N-linked (GlcNAc...) asparagine) is linked at N44. Disulfide bonds link C50–C110, C64–C122, C82–C137, and C89–C98. Y60 carries the 3'-nitrotyrosine modification. 65 to 69 (KNQNT) contacts substrate. 3 N-linked (GlcNAc...) asparagine glycosylation sites follow: N92, N111, and N138. H155 serves as the catalytic Proton donor.

Belongs to the pancreatic ribonuclease family. Interacts with and forms a tight 1:1 complex with RNH1. Dimerization of two such complexes may occur.

It is found in the lysosome. It localises to the cytoplasmic granule. It carries out the reaction an [RNA] containing cytidine + H2O = an [RNA]-3'-cytidine-3'-phosphate + a 5'-hydroxy-ribonucleotide-3'-[RNA].. It catalyses the reaction an [RNA] containing uridine + H2O = an [RNA]-3'-uridine-3'-phosphate + a 5'-hydroxy-ribonucleotide-3'-[RNA].. This is a non-secretory ribonuclease. It is a pyrimidine specific nuclease with a slight preference for U. Cytotoxin and helminthotoxin. Possesses a wide variety of biological activities. The polypeptide is Non-secretory ribonuclease (RNASE2) (Papio hamadryas (Hamadryas baboon)).